Consider the following 874-residue polypeptide: Ectonucleotide pyrophosphatase/phosphodiesterase family member 3 (874 aa).

The Cytoplasmic segment spans residues 1–11; it reads MQSTLNLSTEE. A helical; Signal-anchor for type II membrane protein transmembrane segment spans residues 12-30; sequence PVKRNTVKKYKIICIVLLI. Topologically, residues 31–874 are extracellular; it reads LLVAVSLALG…TYLPVFETVI (844 aa). SMB domains lie at 50-93 and 94-138; these read EQGS…VQST and QIWT…GETS. Cystine bridges form between Cys-54–Cys-71, Cys-58–Cys-89, Cys-69–Cys-82, Cys-75–Cys-81, Cys-98–Cys-115, Cys-103–Cys-133, Cys-113–Cys-126, Cys-119–Cys-125, Cys-144–Cys-190, and Cys-152–Cys-364. Positions 78 to 80 match the Cell attachment site motif; it reads RGD. Residues 160-544 are phosphodiesterase; the sequence is PVILFSMDGF…HGSLNHLLKV (385 aa). Asp-167 is a Zn(2+) binding site. Position 204 (Lys-204) interacts with ATP. A Zn(2+)-binding site is contributed by Thr-205. The Nucleophile role is filled by Thr-205. Residue Asn-226 coordinates ATP. Asn-236 is a glycosylation site (N-linked (GlcNAc...) asparagine). An ATP-binding site is contributed by Asp-275. The N-linked (GlcNAc...) asparagine glycan is linked to Asn-279. Tyr-289 contributes to the ATP binding site. The N-linked (GlcNAc...) asparagine glycan is linked to Asn-290. Zn(2+) is bound by residues Asp-325, His-329, Asp-372, and His-373. 6 cysteine pairs are disulfide-bonded: Cys-380–Cys-477, Cys-428–Cys-817, Cys-561–Cys-622, Cys-574–Cys-678, Cys-576–Cys-663, and Cys-786–Cys-796. Asn-425 carries N-linked (GlcNAc...) asparagine glycosylation. His-482 contributes to the Zn(2+) binding site. N-linked (GlcNAc...) asparagine glycosylation occurs at Asn-532. The nuclease stretch occupies residues 581 to 874; it reads TNSDLERVNQ…TYLPVFETVI (294 aa). Residues Asn-677, Asn-686, and Asn-698 are each glycosylated (N-linked (GlcNAc...) asparagine). Ca(2+)-binding residues include Asp-751, Asp-755, His-757, and Asp-759. N-linked (GlcNAc...) asparagine glycosylation is found at Asn-770, Asn-788, and Asn-820.

The protein belongs to the nucleotide pyrophosphatase/phosphodiesterase family. As to quaternary structure, monomer and homodimer. The cofactor is Zn(2+). N-glycosylated. N-glycosylation is necessary for normal transport to the cell membrane, but is not the apical targeting signal.

It localises to the cell membrane. The protein localises to the apical cell membrane. It is found in the secreted. The catalysed reaction is a ribonucleoside 5'-triphosphate + H2O = a ribonucleoside 5'-phosphate + diphosphate + H(+). It carries out the reaction ATP + H2O = AMP + diphosphate + H(+). The enzyme catalyses CTP + H2O = CMP + diphosphate + H(+). It catalyses the reaction GTP + H2O = GMP + diphosphate + H(+). The catalysed reaction is UTP + H2O = UMP + diphosphate + H(+). It carries out the reaction UDP-N-acetyl-alpha-D-glucosamine + H2O = N-acetyl-alpha-D-glucosamine 1-phosphate + UMP + 2 H(+). The enzyme catalyses P(1),P(3)-bis(5'-adenosyl) triphosphate + H2O = AMP + ADP + 2 H(+). It catalyses the reaction P(1),P(4)-bis(5'-adenosyl) tetraphosphate + H2O = AMP + ATP + 2 H(+). The catalysed reaction is P(1),P(5)-bis(5'-adenosyl) pentaphosphate + H2O = adenosine 5'-tetraphosphate + AMP + 2 H(+). It carries out the reaction P(1),P(4)-bis(5'-guanosyl) tetraphosphate + H2O = GMP + GTP + 2 H(+). The enzyme catalyses Hydrolytically removes 5'-nucleotides successively from the 3'-hydroxy termini of 3'-hydroxy-terminated oligonucleotides.. Functionally, hydrolase that metabolizes extracellular nucleotides, including ATP, GTP, UTP and CTP. Limits mast cells and basophils response during inflammation and during the chronic phases of allergic responses by eliminating extracellular ATP, a signaling molecule activating these cells in an autocrine manner. Metabolizes extracellular ATP in the lumen of the small intestine, and thereby prevents ATP-induced apoptosis of intestinal plasmacytoid dendritic cells. Has a broad specificity and can also hydrolyze UDP-GlcNAc into UMP and GlcNAc-1-phosphate and potentially several other intracellular nucleotide sugars, including UDP-GalNAc, CMP-NeuAc, GDP-Fuc, and UDP-GlcA. Thereby, could modulate glycan biosynthesis and protein glycosylation. Can hydrolyze extracellular dinucleoside polyphosphates, including the vasoactive adenosine polyphosphates as well. In addition, displays an alkaline phosphodiesterase activity in vitro. In Bos taurus (Bovine), this protein is Ectonucleotide pyrophosphatase/phosphodiesterase family member 3 (ENPP3).